The chain runs to 389 residues: ATP-dependent (S)-NAD(P)H-hydrate dehydratase (389 aa).

The 337-residue stretch at 53–389 folds into the YjeF C-terminal domain; that stretch reads TLQLVRNIIP…RGGGRLPQAL (337 aa). Tyrosine 85 bears the Phosphotyrosine mark. Residues glutamate 153 and 205–211 each bind (6S)-NADPHX; that span reads NHMEFSR. ATP contacts are provided by residues 245-249 and 264-273; these read KGERD and GSSRRCGGQG. Residue aspartate 274 participates in (6S)-NADPHX binding. Disordered stretches follow at residues 316–350 and 369–389; these read KTRA…PGGC and RSLH…PQAL.

It belongs to the NnrD/CARKD family. It depends on Mg(2+) as a cofactor.

The protein localises to the mitochondrion. The enzyme catalyses (6S)-NADHX + ATP = ADP + phosphate + NADH + H(+). The catalysed reaction is (6S)-NADPHX + ATP = ADP + phosphate + NADPH + H(+). In terms of biological role, catalyzes the dehydration of the S-form of NAD(P)HX at the expense of ATP, which is converted to ADP. Together with NAD(P)HX epimerase, which catalyzes the epimerization of the S- and R-forms, the enzyme allows the repair of both epimers of NAD(P)HX, a damaged form of NAD(P)H that is a result of enzymatic or heat-dependent hydration. This Macaca mulatta (Rhesus macaque) protein is ATP-dependent (S)-NAD(P)H-hydrate dehydratase.